Here is a 287-residue protein sequence, read N- to C-terminus: Small ribosomal subunit protein uS2 (287 aa).

Positions Glu-235 to Trp-287 are disordered. Over residues Ala-247–Ala-261 the composition is skewed to low complexity.

Belongs to the universal ribosomal protein uS2 family. As to quaternary structure, component of the small ribosomal subunit. Mature ribosomes consist of a small (40S) and a large (60S) subunit. The 40S subunit contains about 33 different proteins and 1 molecule of RNA (18S). The 60S subunit contains about 49 different proteins and 3 molecules of RNA (25S, 5.8S and 5S). Interacts with RPS21.

The protein resides in the cytoplasm. Functionally, required for the assembly and/or stability of the 40S ribosomal subunit. Required for the processing of the 20S rRNA-precursor to mature 18S rRNA in a late step of the maturation of 40S ribosomal subunits. This Pyricularia oryzae (strain 70-15 / ATCC MYA-4617 / FGSC 8958) (Rice blast fungus) protein is Small ribosomal subunit protein uS2.